The sequence spans 385 residues: DNA replication and repair protein RecF (385 aa).

30-37 (GPNGNGKT) lines the ATP pocket.

It belongs to the RecF family.

Its subcellular location is the cytoplasm. Its function is as follows. The RecF protein is involved in DNA metabolism; it is required for DNA replication and normal SOS inducibility. RecF binds preferentially to single-stranded, linear DNA. It also seems to bind ATP. This chain is DNA replication and repair protein RecF, found in Mycobacterium leprae (strain Br4923).